The sequence spans 1029 residues: U2 snRNP-associated SURP motif-containing protein (1029 aa).

Disordered regions lie at residues 1-110 (MADK…KEDE) and 141-273 (VNAA…DPST). Ala-2 carries the N-acetylalanine modification. Residues 7–16 (GGSQKASSKN) show a composition bias toward polar residues. Positions 45–54 (TRPKSPRKHN) are enriched in basic residues. Residues 55–64 (YRNESSRESL) are compositionally biased toward basic and acidic residues. Residue Ser-67 is modified to Phosphoserine. Lys-80 is covalently cross-linked (Glycyl lysine isopeptide (Lys-Gly) (interchain with G-Cter in SUMO2)). The stretch at 92-121 (AKRTLSKKEQEELKKKEDEKAAAEIYEEFL) forms a coiled coil. Composition is skewed to basic and acidic residues over residues 97 to 110 (SKKEQEELKKKEDE) and 144 to 155 (AKDEHETDEKRG). Glycyl lysine isopeptide (Lys-Gly) (interchain with G-Cter in SUMO2) cross-links involve residues Lys-145 and Lys-168. Residues 169 to 178 (NPPNQSSNER) are compositionally biased toward polar residues. The segment covering 186 to 222 (ETKKPPLKKGEKEKKKSNLELFKEELKQIQEERDERH) has biased composition (basic and acidic residues). Residues 192 to 232 (LKKGEKEKKKSNLELFKEELKQIQEERDERHKTKGRLSRFE) are a coiled coil. Ser-202 is subject to Phosphoserine. Lys-208 is covalently cross-linked (Glycyl lysine isopeptide (Lys-Gly) (interchain with G-Cter in SUMO2)). Ser-236 bears the Phosphoserine mark. A compositionally biased stretch (basic and acidic residues) spans 239–249 (DGQRRSMDVPS). Positions 274-355 (TNLYLGNINP…FEMKLGWGKA (82 aa)) constitute an RRM domain. The stretch at 430 to 473 (LIHRMIEFVVREGPMFEAMIMNREINNPMFRFLFENQTPAHVYY) is one SURP motif repeat. Position 485 is a phosphoserine (Ser-485). Positions 534–679 (LKEEQRDKLE…KLQNIFLGLV (146 aa)) constitute a CID domain. The disordered stretch occupies residues 704 to 729 (DGAPLEDVDGIPIDATPIDDLDGVPI). Thr-719 is modified (phosphothreonine). Glycyl lysine isopeptide (Lys-Gly) (interchain with G-Cter in SUMO2) cross-links involve residues Lys-748 and Lys-749. The residue at position 760 (Lys-760) is an N6-acetyllysine; alternate. A Glycyl lysine isopeptide (Lys-Gly) (interchain with G-Cter in SUMO2); alternate cross-link involves residue Lys-760. 2 disordered regions span residues 778–841 (KWEL…EEKR) and 855–1029 (QDEL…KNKH). Over residues 786 to 806 (EESEEEENQNQEEESEDEEDT) the composition is skewed to acidic residues. Residues Ser-788, Ser-800, and Ser-811 each carry the phosphoserine modification. 2 stretches are compositionally biased toward basic and acidic residues: residues 810–841 (KSEEHHLYSNPVREEATESKFSKYSEMSEEKR) and 874–922 (QVEH…TPTR). Glycyl lysine isopeptide (Lys-Gly) (interchain with G-Cter in SUMO2) cross-links involve residues Lys-829 and Lys-832. Residues 837–915 (SEEKRAKLRE…ESRSKDKKEK (79 aa)) adopt a coiled-coil conformation. The residue at position 931 (Thr-931) is a Phosphothreonine. Phosphoserine is present on residues Ser-946 and Ser-948. The segment covering 950–980 (KSERSERSERSHKESSRSRSSHKDSPRDASK) has biased composition (basic and acidic residues). Basic residues predominate over residues 991 to 1029 (TPKRSRRSRSRSPKKSGKKSRSQSRSPHRSHKKSKKNKH).

This sequence belongs to the splicing factor SR family. In terms of assembly, interacts with ERBB4.

It is found in the nucleus. The polypeptide is U2 snRNP-associated SURP motif-containing protein (U2surp) (Mus musculus (Mouse)).